The following is a 566-amino-acid chain: Chaperone Ric-8 (566 aa).

It belongs to the synembryn family. Interacts with GDP-bound G(i)-alpha protein. Does not interact with G-alpha proteins when they are in complex with subunits beta and gamma. Interacts with Frq2 in a Ca(2+)-independent manner but does not interact with Frq1.

The protein resides in the cytoplasm. Its subcellular location is the cell cortex. The protein localises to the presynapse. Its function is as follows. Chaperone that specifically binds and folds some, but not all, nascent G alpha proteins prior to G protein heterotrimer formation, promoting their stability and activity. Also acts as a guanine nucleotide exchange factor (GEF) for G alpha proteins by stimulating exchange of bound GDP for free GTP. Plays a key role in asymmetric spindle positioning, a step for asymmetric cell division that generates cell diversity during development by activating G(i) alpha protein independently of G-protein coupled receptors. Required during gastrulation and sensory organ precursor (SOP) formation. Plays a role in positively regulating synapse number and neurotransmitter release. The protein is Chaperone Ric-8 (ric8a) of Drosophila pseudoobscura pseudoobscura (Fruit fly).